We begin with the raw amino-acid sequence, 112 residues long: Cell cycle protein GpsB (112 aa).

Residues 42–77 (YQKMADMNNEVVKLSEENHKLKKELEELRLRVATSR) are a coiled coil. A disordered region spans residues 74 to 96 (ATSRPQDNKNFSSNNSSSASNNV). The segment covering 81–95 (NKNFSSNNSSSASNN) has biased composition (low complexity).

It belongs to the GpsB family. In terms of assembly, forms polymers through the coiled coil domains. Interacts with PBP1, MreC and EzrA.

The protein localises to the cytoplasm. In terms of biological role, divisome component that associates with the complex late in its assembly, after the Z-ring is formed, and is dependent on DivIC and PBP2B for its recruitment to the divisome. Together with EzrA, is a key component of the system that regulates PBP1 localization during cell cycle progression. Its main role could be the removal of PBP1 from the cell pole after pole maturation is completed. Also contributes to the recruitment of PBP1 to the division complex. Not essential for septum formation. In Staphylococcus epidermidis (strain ATCC 12228 / FDA PCI 1200), this protein is Cell cycle protein GpsB.